Consider the following 314-residue polypeptide: Olfactory receptor 1Q1 (314 aa).

Over Met1–Ile25 the chain is Extracellular. The N-linked (GlcNAc...) asparagine glycan is linked to Asn5. A helical transmembrane segment spans residues Pro26–Ile49. Over Leu50–Ile57 the chain is Cytoplasmic. A helical membrane pass occupies residues Pro58–Pro79. Over Lys80–Gln100 the chain is Extracellular. A disulfide bridge links Cys97 with Cys189. A helical transmembrane segment spans residues Thr101 to Tyr120. Over Asp121–Met139 the chain is Cytoplasmic. Residues Leu140–Leu158 traverse the membrane as a helical segment. Topologically, residues His159–Asn195 are extracellular. A helical transmembrane segment spans residues Thr196–Ala219. The Cytoplasmic portion of the chain corresponds to Cys220–Lys236. A helical transmembrane segment spans residues Thr237 to Tyr259. The Extracellular portion of the chain corresponds to Phe260–Arg272. The helical transmembrane segment at Ile273–Leu292 threads the bilayer. The Cytoplasmic portion of the chain corresponds to Arg293–Arg314.

This sequence belongs to the G-protein coupled receptor 1 family.

It localises to the cell membrane. Odorant receptor. In Homo sapiens (Human), this protein is Olfactory receptor 1Q1 (OR1Q1).